Here is an 87-residue protein sequence, read N- to C-terminus: Phosphoribosyl-ATP pyrophosphatase (87 aa).

Belongs to the PRA-PH family.

Its subcellular location is the cytoplasm. The catalysed reaction is 1-(5-phospho-beta-D-ribosyl)-ATP + H2O = 1-(5-phospho-beta-D-ribosyl)-5'-AMP + diphosphate + H(+). Its pathway is amino-acid biosynthesis; L-histidine biosynthesis; L-histidine from 5-phospho-alpha-D-ribose 1-diphosphate: step 2/9. In Bifidobacterium longum (strain DJO10A), this protein is Phosphoribosyl-ATP pyrophosphatase.